A 35-amino-acid chain; its full sequence is Photosystem II reaction center protein T (35 aa).

Residues 3 to 23 (ALVYTFLLVSTLGILFFAIFF) form a helical membrane-spanning segment.

This sequence belongs to the PsbT family. PSII is composed of 1 copy each of membrane proteins PsbA, PsbB, PsbC, PsbD, PsbE, PsbF, PsbH, PsbI, PsbJ, PsbK, PsbL, PsbM, PsbT, PsbY, PsbZ, Psb30/Ycf12, at least 3 peripheral proteins of the oxygen-evolving complex and a large number of cofactors. It forms dimeric complexes.

The protein resides in the plastid. It is found in the chloroplast thylakoid membrane. Functionally, found at the monomer-monomer interface of the photosystem II (PS II) dimer, plays a role in assembly and dimerization of PSII. PSII is a light-driven water plastoquinone oxidoreductase, using light energy to abstract electrons from H(2)O, generating a proton gradient subsequently used for ATP formation. This chain is Photosystem II reaction center protein T, found in Gnetum gnemon (Spanish joint-fir).